The following is a 389-amino-acid chain: 26S proteasome non-ATPase regulatory subunit 6 (389 aa).

A PCI domain is found at 193-361 (DFKQAAELFL…EVVETNRPDS (169 aa)).

This sequence belongs to the proteasome subunit S10 family. In terms of assembly, component of the 19S proteasome regulatory particle complex. The 26S proteasome consists of a 20S core particle (CP) and two 19S regulatory subunits (RP). The regulatory particle is made of a lid composed of 9 subunits including PSMD6, a base containing 6 ATPases and few additional components.

In terms of biological role, component of the 26S proteasome, a multiprotein complex involved in the ATP-dependent degradation of ubiquitinated proteins. This complex plays a key role in the maintenance of protein homeostasis by removing misfolded or damaged proteins, which could impair cellular functions, and by removing proteins whose functions are no longer required. Therefore, the proteasome participates in numerous cellular processes, including cell cycle progression, apoptosis, or DNA damage repair. This is 26S proteasome non-ATPase regulatory subunit 6 (PSMD6) from Bos taurus (Bovine).